Consider the following 106-residue polypeptide: Terpredoxin (106 aa).

One can recognise a 2Fe-2S ferredoxin-type domain in the interval 2–106 (PRVVFIDEQS…GLIVRVPLPA (105 aa)). Residues cysteine 40, cysteine 46, cysteine 49, and cysteine 87 each coordinate [2Fe-2S] cluster.

Belongs to the adrenodoxin/putidaredoxin family. Requires [2Fe-2S] cluster as cofactor.

In terms of biological role, the oxidation of alpha-terpineol by cytochrome p450-TERP requires the participation of a flavoprotein, terpredoxin reductase, and an iron-sulfur protein, terpredoxin, to mediate the transfer of electrons from NADH to P450 for oxygen activation. This chain is Terpredoxin (terPB), found in Pseudomonas sp.